The primary structure comprises 117 residues: Non-specific lipid-transfer protein 1 (117 aa).

The signal sequence occupies residues 1 to 25 (MAGLVKLSCLVLACMIVAGPIATNA). Cystine bridges form between C29-C76, C39-C53, C54-C99, and C74-C113.

It belongs to the plant LTP family.

Plant non-specific lipid-transfer proteins transfer phospholipids as well as galactolipids across membranes. May play a role in wax or cutin deposition in the cell walls of expanding epidermal cells and certain secretory tissues. The chain is Non-specific lipid-transfer protein 1 (LTP1) from Brassica napus (Rape).